A 200-amino-acid polypeptide reads, in one-letter code: Charged multivesicular body protein 6-B (200 aa).

The N-myristoyl glycine moiety is linked to residue Gly2. Residues 9–102 (RRSRVTEQDK…FAQIEMKVIE (94 aa)) are a coiled coil. The tract at residues 165-200 (QEDLELPEAPSEPLSDTVPEKQAVKNRPKPQLVAAS) is disordered. The Type-2 MIT-interacting motif signature appears at 168–179 (LELPEAPSEPLS).

Belongs to the SNF7 family. As to quaternary structure, probable core component of the endosomal sorting required for transport complex III (ESCRT-III). ESCRT-III components are thought to multimerize to form a flat lattice on the perimeter membrane of the endosome.

The protein resides in the endomembrane system. It localises to the late endosome membrane. In terms of biological role, probable core component of the endosomal sorting required for transport complex III (ESCRT-III) which is involved in multivesicular bodies (MVBs) formation and sorting of endosomal cargo proteins into MVBs. MVBs contain intraluminal vesicles (ILVs) that are generated by invagination and scission from the limiting membrane of the endosome and mostly are delivered to lysosomes enabling degradation of membrane proteins, such as stimulated growth factor receptors, lysosomal enzymes and lipids. In the ESCRT-III complex, it probably serves as an acceptor for the ESCRT-II complex on endosomal membranes. The protein is Charged multivesicular body protein 6-B (chmp6-b) of Xenopus laevis (African clawed frog).